A 71-amino-acid chain; its full sequence is Conotoxin LvVIIB (71 aa).

The signal sequence occupies residues 1-17; the sequence is VLIIAVLFLAASELVTA. Positions 18 to 42 are excised as a propeptide; sequence DYTRDEWQYRAASLRDAMRNFRDTR. Disulfide bonds link C43/C57, C50/C62, and C56/C69.

Belongs to the conotoxin O1 superfamily. As to expression, expressed by the venom duct.

The protein localises to the secreted. This is Conotoxin LvVIIB from Conus lividus (Livid cone).